The chain runs to 144 residues: Transcriptional regulator SlyA (144 aa).

The region spanning 2-135 (ESPLGSDLAR…LLHLIRKLEQ (134 aa)) is the HTH marR-type domain. Positions 49–72 (QIQLAKAIGIEQPSLVRTLDQLEE) form a DNA-binding region, H-T-H motif.

The protein belongs to the SlyA family. In terms of assembly, homodimer.

In terms of biological role, transcription regulator that can specifically activate or repress expression of target genes. In Klebsiella pneumoniae (strain 342), this protein is Transcriptional regulator SlyA.